The primary structure comprises 533 residues: Inositol-3-phosphate synthase (533 aa).

The residue at position 48 (T48) is a Phosphothreonine. The NAD(+) site is built by G74, G75, N76, N77, and D148. Phosphoserine occurs at positions 177 and 184. Positions 184, 185, 195, 196, 198, 244, 245, 246, 247, 295, 296, 320, 321, 323, 354, 355, and 356 each coordinate NAD(+). Residue S296 is modified to Phosphoserine. Phosphoserine is present on S368. K369 is an NAD(+) binding site. At S374 the chain carries Phosphoserine. Positions 409, 410, 438, and 439 each coordinate NAD(+).

Belongs to the myo-inositol 1-phosphate synthase family. Homotetramer. NAD(+) is required as a cofactor. Post-translationally, phosphorylation at Ser-184 and Ser-374 is associated with a decrease in activity. Increasingly phosphorylated in presence of valproate.

The protein localises to the cytoplasm. The enzyme catalyses D-glucose 6-phosphate = 1D-myo-inositol 3-phosphate. It participates in polyol metabolism; myo-inositol biosynthesis; myo-inositol from D-glucose 6-phosphate: step 1/2. Its activity is regulated as follows. Competitively inhibited by myo-2-inosose 1-phosphate, which is also an intermediate in the catalytic reaction. Competitively inhibited by 2-deoxy-myo-inositol 1-phosphate (dMIP), 1-deoxy-1-(phosphonomethyl)-myo-2-inosose (DPMI), dihydroxyacetone phosphate (DHAP), 6-deoxy-D-glucose 6-(E)-vinylhomophosphonate, 6-deoxy-D-glucitol 6-(E)-vinylhomophosphonate, 2,6-dideoxy-D-glucose 6-(E)-vinylhomophosphonate and 2,6-dideoxy-D-glucitol 6-(E)-vinylhomophosphonate. Inhibited by 2-deoxyglucitol 6-phosphate (dgtolP). Functionally, key enzyme in myo-inositol biosynthesis pathway that catalyzes the conversion of glucose 6-phosphate to 1-myo-inositol 1-phosphate in a NAD-dependent manner. Rate-limiting enzyme in the synthesis of all inositol-containing compounds. The polypeptide is Inositol-3-phosphate synthase (INO1) (Saccharomyces cerevisiae (strain ATCC 204508 / S288c) (Baker's yeast)).